A 442-amino-acid chain; its full sequence is Histidinol dehydrogenase (442 aa).

Tyrosine 132, glutamine 194, and asparagine 217 together coordinate NAD(+). Residues serine 243, glutamine 265, and histidine 268 each coordinate substrate. Zn(2+) is bound by residues glutamine 265 and histidine 268. Residues glutamate 332 and histidine 333 each act as proton acceptor in the active site. Substrate contacts are provided by histidine 333, aspartate 366, glutamate 420, and histidine 425. Aspartate 366 is a binding site for Zn(2+). Histidine 425 provides a ligand contact to Zn(2+).

This sequence belongs to the histidinol dehydrogenase family. It depends on Zn(2+) as a cofactor.

The catalysed reaction is L-histidinol + 2 NAD(+) + H2O = L-histidine + 2 NADH + 3 H(+). It participates in amino-acid biosynthesis; L-histidine biosynthesis; L-histidine from 5-phospho-alpha-D-ribose 1-diphosphate: step 9/9. Functionally, catalyzes the sequential NAD-dependent oxidations of L-histidinol to L-histidinaldehyde and then to L-histidine. The chain is Histidinol dehydrogenase from Idiomarina loihiensis (strain ATCC BAA-735 / DSM 15497 / L2-TR).